The sequence spans 399 residues: Probable endo-xylogalacturonan hydrolase A (399 aa).

The N-terminal stretch at 1 to 19 (MTFGKAAFLSFSLFGASWA) is a signal peptide. 5 PbH1 repeats span residues 177–207 (TTNA…DIGE), 208–229 (STYV…AFKP), 231–251 (CNYL…SVGS), 260–283 (VQNV…KTYP), and 293–314 (VTNV…QIQS). Asp222 functions as the Proton donor in the catalytic mechanism. His245 is an active-site residue. Asn295 and Asn382 each carry an N-linked (GlcNAc...) asparagine glycan.

The protein belongs to the glycosyl hydrolase 28 family.

It localises to the secreted. Pectinolytic enzyme involved in the degradation of xylogalacturonan (xga), a galacturonan backbone heavily substituted with xylose, and which is one important component of the hairy regions of pectin. Activity requires a galacturonic acid backbone substituted with xylose. The chain is Probable endo-xylogalacturonan hydrolase A (xghA) from Emericella nidulans (strain FGSC A4 / ATCC 38163 / CBS 112.46 / NRRL 194 / M139) (Aspergillus nidulans).